An 865-amino-acid chain; its full sequence is DNA topoisomerase 3-beta (865 aa).

The 146-residue stretch at 6–151 (RVLMVAEKPS…KVYRARFSSV (146 aa)) folds into the Toprim domain. Mg(2+) contacts are provided by Glu12, Asp116, and Asp118. Residues 167–587 (NRDEALAVDA…HVIQQFRRKF (421 aa)) enclose the Topo IA-type catalytic domain. The tract at residues 209 to 214 (SYGPCQ) is interaction with DNA. The O-(5'-phospho-DNA)-tyrosine intermediate role is filled by Tyr331. Basic residues predominate over residues 833-853 (RRGGRGRGRGRGRGRGGRRGS). Residues 833–865 (RRGGRGRGRGRGRGRGGRRGSKSVDPKMSFRDF) are disordered. Residues 854-865 (KSVDPKMSFRDF) show a composition bias toward basic and acidic residues.

It belongs to the type IA topoisomerase family. Requires Mg(2+) as cofactor.

It catalyses the reaction ATP-independent breakage of single-stranded DNA, followed by passage and rejoining.. Functionally, releases the supercoiling and torsional tension of DNA introduced during the DNA replication and transcription by transiently cleaving and rejoining one strand of the DNA duplex. Introduces a single-strand break via transesterification at a target site in duplex DNA. The scissile phosphodiester is attacked by the catalytic tyrosine of the enzyme, resulting in the formation of a DNA-(5'-phosphotyrosyl)-enzyme intermediate and the expulsion of a 3'-OH DNA strand. The free DNA strand than undergoes passage around the unbroken strand thus removing DNA supercoils. Finally, in the religation step, the DNA 3'-OH attacks the covalent intermediate to expel the active-site tyrosine and restore the DNA phosphodiester backbone. This chain is DNA topoisomerase 3-beta, found in Arabidopsis thaliana (Mouse-ear cress).